A 688-amino-acid polypeptide reads, in one-letter code: Soluble guanylate cyclase gcy-35 (688 aa).

Residue histidine 105 coordinates heme. The stretch at leucine 358 to methionine 401 forms a coiled coil. The 129-residue stretch at threonine 424 to glutamate 552 folds into the Guanylate cyclase domain. Mg(2+) contacts are provided by aspartate 429 and aspartate 473. Residues valine 644 to serine 688 are disordered. The segment covering asparagine 646–asparagine 659 has biased composition (low complexity).

This sequence belongs to the adenylyl cyclase class-4/guanylyl cyclase family. Heterodimer; heterodimerizes with gcy-36, and possibly with other soluble guanylate cyclases. It depends on heme as a cofactor. In terms of tissue distribution, expressed in URX, AQR and PQR neurons. Also expressed in ALN, SDQ and BDU neurons, and variably in AVM, PLM and PLN neurons, pharyngeal and body wall muscles, and the excretory cell.

The protein resides in the cytoplasm. Its subcellular location is the cell projection. It localises to the dendrite. It catalyses the reaction GTP = 3',5'-cyclic GMP + diphosphate. With respect to regulation, regulated by molecular oxygen, which binds to the heme binding site. Probably not activated by nitric oxide (NO). In terms of biological role, plays a central role in social feeding behavior and oxygen sensation by synthesizing 3',5'-cyclic guanosine monophosphate (cGMP) from GTP. Oxygen, which binds to its heme-binding sites, probably regulates social behavior by modulating its activity. cGMP is a common second messenger in sensory transduction and is implicated in oxygen sensation. Indeed, C.elegans exhibits a strong behavioral preference for 5-12% oxygen, avoiding higher and lower oxygen levels; a higher level of oxygen inducing a naturally polymorphic social feeding behavior. Involved in avoidance of hyperoxia and for oxygen-induced aggregation and bordering, probably by mediating oxygen-sensing in URX, AQR and PQR sensory neurons. The chain is Soluble guanylate cyclase gcy-35 (gcy-35) from Caenorhabditis elegans.